The chain runs to 276 residues: Bifunctional esterase/perhydrolase DCH (276 aa).

One can recognise an AB hydrolase-1 domain in the interval 23 to 254 (PVIFFHHGWP…NGKLISYPGF (232 aa)). Active-site residues include serine 97, aspartate 227, and histidine 256.

It belongs to the AB hydrolase superfamily. Bacterial non-heme haloperoxidase / perhydrolase family. As to quaternary structure, homodimer.

It catalyses the reaction 3,4-dihydrocoumarin + H2O = 3-(2-hydroxyphenyl)propanoate + H(+). The enzyme catalyses peracetic acid + H2O = acetate + H2O2 + H(+). It carries out the reaction a percarboxylic acid + H2O = a carboxylate + H2O2 + H(+). With respect to regulation, inhibited by the serine protease inhibitors diisopropyl fluorophosphate and phenylmethanesulfonyl fluoride. Its function is as follows. Multifunctional enzyme, which shows esterase and perhydrolase activities, and is capable of organic acid-assisted bromination of organic compounds. Catalyzes the hydrolysis of 3,4-dihydrocoumarin. Aromatic lactones other than 3,4-dihydrocoumarin, such as 2-coumaranone and homogentisic acid lactone, are also substrates, but their activities relative to that of 3,4-dihydrocoumarin are quite low. Also catalyzes the hydrolysis of several linear esters, with specificity toward methyl esters. In addition, shows perhydrolase activity and catalyzes the dose- and time-dependent degradation of peracetic acid, a broad-spectrum biocide, to acetic acid and hydrogen peroxide. It suggests that in vivo DCH may play a role in the oxidative stress defense system and detoxify peroxoacids in conjunction with the catalase, i.e. peroxoacids are first hydrolyzed to the corresponding acids and hydrogen peroxide by DCH, and then the resulting hydrogen peroxide is degraded by the catalase. Also shows organic acid-assisted bromination activity toward monochlorodimedon when incubated with hydrogen peroxide and dihydrocoumarin or an organic acid, such as acetate and n-butyrate. The protein is Bifunctional esterase/perhydrolase DCH of Acinetobacter calcoaceticus.